A 173-amino-acid polypeptide reads, in one-letter code: Translation initiation factor IF-3 (173 aa).

Belongs to the IF-3 family. In terms of assembly, monomer.

Its subcellular location is the cytoplasm. In terms of biological role, IF-3 binds to the 30S ribosomal subunit and shifts the equilibrium between 70S ribosomes and their 50S and 30S subunits in favor of the free subunits, thus enhancing the availability of 30S subunits on which protein synthesis initiation begins. In Parvibaculum lavamentivorans (strain DS-1 / DSM 13023 / NCIMB 13966), this protein is Translation initiation factor IF-3.